A 314-amino-acid polypeptide reads, in one-letter code: tRNA pseudouridine synthase B (314 aa).

The active-site Nucleophile is Asp54.

This sequence belongs to the pseudouridine synthase TruB family. Type 1 subfamily.

It carries out the reaction uridine(55) in tRNA = pseudouridine(55) in tRNA. In terms of biological role, responsible for synthesis of pseudouridine from uracil-55 in the psi GC loop of transfer RNAs. This is tRNA pseudouridine synthase B from Ralstonia nicotianae (strain ATCC BAA-1114 / GMI1000) (Ralstonia solanacearum).